The following is a 229-amino-acid chain: 23 kDa piroplasm membrane protein (229 aa).

The signal sequence occupies residues methionine 1–serine 19. The Extracellular portion of the chain corresponds to serine 20–tyrosine 203. Residues valine 204–valine 224 form a helical membrane-spanning segment. Residues lysine 225–lysine 229 are Cytoplasmic-facing.

Its subcellular location is the membrane. The polypeptide is 23 kDa piroplasm membrane protein (Theileria annulata).